Here is a 367-residue protein sequence, read N- to C-terminus: Chorismate synthase (367 aa).

The disordered stretch occupies residues 41–60 (FTHDLQRRASGKSRHTSARR). Arg-48 and Arg-54 together coordinate NADP(+). Residues 125 to 127 (RSS), 238 to 239 (NA), Gly-278, 293 to 297 (KPTSS), and Arg-319 each bind FMN.

It belongs to the chorismate synthase family. Homotetramer. FMNH2 serves as cofactor.

It catalyses the reaction 5-O-(1-carboxyvinyl)-3-phosphoshikimate = chorismate + phosphate. It participates in metabolic intermediate biosynthesis; chorismate biosynthesis; chorismate from D-erythrose 4-phosphate and phosphoenolpyruvate: step 7/7. Catalyzes the anti-1,4-elimination of the C-3 phosphate and the C-6 proR hydrogen from 5-enolpyruvylshikimate-3-phosphate (EPSP) to yield chorismate, which is the branch point compound that serves as the starting substrate for the three terminal pathways of aromatic amino acid biosynthesis. This reaction introduces a second double bond into the aromatic ring system. The sequence is that of Chorismate synthase from Xanthomonas euvesicatoria pv. vesicatoria (strain 85-10) (Xanthomonas campestris pv. vesicatoria).